Consider the following 338-residue polypeptide: Lipoate-protein ligase A (338 aa).

The BPL/LPL catalytic domain occupies 29–216; it reads PATQRVLFLW…AFFAHYGERV (188 aa). ATP contacts are provided by residues arginine 71, 76-79, and lysine 134; that span reads GAVF. Lysine 134 lines the (R)-lipoate pocket.

This sequence belongs to the LplA family. In terms of assembly, monomer.

It is found in the cytoplasm. The catalysed reaction is L-lysyl-[lipoyl-carrier protein] + (R)-lipoate + ATP = N(6)-[(R)-lipoyl]-L-lysyl-[lipoyl-carrier protein] + AMP + diphosphate + H(+). The protein operates within protein modification; protein lipoylation via exogenous pathway; protein N(6)-(lipoyl)lysine from lipoate: step 1/2. Its pathway is protein modification; protein lipoylation via exogenous pathway; protein N(6)-(lipoyl)lysine from lipoate: step 2/2. In terms of biological role, catalyzes both the ATP-dependent activation of exogenously supplied lipoate to lipoyl-AMP and the transfer of the activated lipoyl onto the lipoyl domains of lipoate-dependent enzymes. In Shigella sonnei (strain Ss046), this protein is Lipoate-protein ligase A.